Reading from the N-terminus, the 271-residue chain is uncharacterized protein (271 aa).

The 129-residue stretch at 77-205 (IIGVYFGDAN…SKELLKKLDV (129 aa)) folds into the DOD-type homing endonuclease domain.

This is an uncharacterized protein from Methanocaldococcus jannaschii (strain ATCC 43067 / DSM 2661 / JAL-1 / JCM 10045 / NBRC 100440) (Methanococcus jannaschii).